The sequence spans 56 residues: Large ribosomal subunit protein bL33A (56 aa).

This sequence belongs to the bacterial ribosomal protein bL33 family.

This chain is Large ribosomal subunit protein bL33A, found in Sorangium cellulosum (strain So ce56) (Polyangium cellulosum (strain So ce56)).